The sequence spans 347 residues: NADH-quinone oxidoreductase subunit H (347 aa).

Helical transmembrane passes span 13–33, 50–70, 82–102, 115–135, 161–181, 198–218, 248–268, 286–306, and 325–345; these read LIIA…VAYL, PNVV…KFVF, GVFL…WAVI, VGIL…IMGG, IGFV…TDIV, FLDW…ISAL, FLLF…LMTV, VPGI…FAMV, and VFLP…KVFG.

Belongs to the complex I subunit 1 family. As to quaternary structure, NDH-1 is composed of 14 different subunits. Subunits NuoA, H, J, K, L, M, N constitute the membrane sector of the complex.

Its subcellular location is the cell inner membrane. It catalyses the reaction a quinone + NADH + 5 H(+)(in) = a quinol + NAD(+) + 4 H(+)(out). NDH-1 shuttles electrons from NADH, via FMN and iron-sulfur (Fe-S) centers, to quinones in the respiratory chain. The immediate electron acceptor for the enzyme in this species is believed to be ubiquinone. Couples the redox reaction to proton translocation (for every two electrons transferred, four hydrogen ions are translocated across the cytoplasmic membrane), and thus conserves the redox energy in a proton gradient. This subunit may bind ubiquinone. The polypeptide is NADH-quinone oxidoreductase subunit H (Brucella abortus (strain 2308)).